The primary structure comprises 652 residues: Phosphomethylpyrimidine synthase (652 aa).

Substrate is bound by residues asparagine 235, methionine 264, tyrosine 293, histidine 329, 349–351 (SRG), 390–393 (DGMR), and glutamate 429. Residue histidine 433 participates in Zn(2+) binding. Tyrosine 456 contacts substrate. Histidine 497 is a Zn(2+) binding site. Cysteine 577, cysteine 580, and cysteine 585 together coordinate [4Fe-4S] cluster.

The protein belongs to the ThiC family. In terms of assembly, homodimer. [4Fe-4S] cluster serves as cofactor.

It catalyses the reaction 5-amino-1-(5-phospho-beta-D-ribosyl)imidazole + S-adenosyl-L-methionine = 4-amino-2-methyl-5-(phosphooxymethyl)pyrimidine + CO + 5'-deoxyadenosine + formate + L-methionine + 3 H(+). The protein operates within cofactor biosynthesis; thiamine diphosphate biosynthesis. Its function is as follows. Catalyzes the synthesis of the hydroxymethylpyrimidine phosphate (HMP-P) moiety of thiamine from aminoimidazole ribotide (AIR) in a radical S-adenosyl-L-methionine (SAM)-dependent reaction. The polypeptide is Phosphomethylpyrimidine synthase (Shewanella woodyi (strain ATCC 51908 / MS32)).